Here is a 105-residue protein sequence, read N- to C-terminus: MFAVIKAGGKQYKVDRNSIIKVEKIDGELGSKIQFDQILMIGEYSKPSFIGTPIVKGAVVTAEITNQLKDNKIIVFKKKRRKNYRRKAGHRQELTELKILDITKQ.

Belongs to the bacterial ribosomal protein bL21 family. Part of the 50S ribosomal subunit. Contacts protein L20.

This protein binds to 23S rRNA in the presence of protein L20. The chain is Large ribosomal subunit protein bL21 from Rickettsia africae (strain ESF-5).